Reading from the N-terminus, the 120-residue chain is NAD(P)H-quinone oxidoreductase subunit 3, chloroplastic (120 aa).

The next 3 helical transmembrane spans lie at Ile-9–Gly-29, Met-64–Met-84, and Val-88–Ser-108.

This sequence belongs to the complex I subunit 3 family. As to quaternary structure, NDH is composed of at least 16 different subunits, 5 of which are encoded in the nucleus.

The protein resides in the plastid. It localises to the chloroplast thylakoid membrane. The enzyme catalyses a plastoquinone + NADH + (n+1) H(+)(in) = a plastoquinol + NAD(+) + n H(+)(out). It carries out the reaction a plastoquinone + NADPH + (n+1) H(+)(in) = a plastoquinol + NADP(+) + n H(+)(out). Functionally, NDH shuttles electrons from NAD(P)H:plastoquinone, via FMN and iron-sulfur (Fe-S) centers, to quinones in the photosynthetic chain and possibly in a chloroplast respiratory chain. The immediate electron acceptor for the enzyme in this species is believed to be plastoquinone. Couples the redox reaction to proton translocation, and thus conserves the redox energy in a proton gradient. The sequence is that of NAD(P)H-quinone oxidoreductase subunit 3, chloroplastic from Drimys granadensis.